The chain runs to 110 residues: Putative pterin-4-alpha-carbinolamine dehydratase (110 aa).

This sequence belongs to the pterin-4-alpha-carbinolamine dehydratase family.

It catalyses the reaction (4aS,6R)-4a-hydroxy-L-erythro-5,6,7,8-tetrahydrobiopterin = (6R)-L-erythro-6,7-dihydrobiopterin + H2O. The polypeptide is Putative pterin-4-alpha-carbinolamine dehydratase (Vibrio vulnificus (strain CMCP6)).